A 137-amino-acid chain; its full sequence is Gonadotropin subunit beta-1 (137 aa).

The N-terminal stretch at 1–24 (MYCTHLMTLQLVVMAMLWVTPVRA) is a signal peptide. Cystine bridges form between Cys32–Cys78, Cys46–Cys93, Cys55–Cys108, Cys59–Cys110, and Cys113–Cys120. Asn36 carries an N-linked (GlcNAc...) asparagine glycan.

Belongs to the glycoprotein hormones subunit beta family. In terms of assembly, heterodimer of an alpha and a beta chain.

The protein localises to the secreted. In terms of biological role, involved in gametogenesis and steroidogenesis. The polypeptide is Gonadotropin subunit beta-1 (cgba) (Oncorhynchus keta (Chum salmon)).